The sequence spans 121 residues: Chromosome transmission fidelity protein 8 homolog (121 aa).

It belongs to the CTF8 family. Component of the CTF18-RFC complex, which consists of CTF18, CTF8, DSCC1, RFC2, RFC3, RFC4 and RFC5. The CTF18-RFC complex does not interact with the Rad9/Rad1/Hus1 complex. The CTF18-RFC complex interacts with POLH. CTF18/CTF8/DSCC1 associate with PCNA. CTF8 exists as a dimer with DSCC1.

It localises to the nucleus. In terms of biological role, chromosome cohesion factor involved in sister chromatid cohesion and fidelity of chromosome transmission. Component of one of the cell nuclear antigen loader complexes, CTF18-replication factor C (CTF18-RFC), which consists of CTF18, CTF8, DSCC1, RFC2, RFC3, RFC4 and RFC5. The CTF18-RFC complex binds to single-stranded and primed DNAs and has weak ATPase activity that is stimulated the presence of primed DNA, replication protein A (RPA) and proliferating cell nuclear antigen (PCNA). The CTF18-RFC complex catalyzes the ATP-dependent loading of PCNA onto primed and gapped DNA. It also interacts with and stimulates POLH, which is suggestive of a protein network that coordinates DNA repair, recombination and chromosome cohesion reactions with replication fork progression. This chain is Chromosome transmission fidelity protein 8 homolog, found in Rattus norvegicus (Rat).